We begin with the raw amino-acid sequence, 271 residues long: Thiazole synthase (271 aa).

The Schiff-base intermediate with DXP role is filled by Lys-95. 1-deoxy-D-xylulose 5-phosphate-binding positions include Gly-156, 182 to 183 (AG), and 204 to 205 (NT).

The protein belongs to the ThiG family. As to quaternary structure, homotetramer. Forms heterodimers with either ThiH or ThiS.

The protein resides in the cytoplasm. The catalysed reaction is [ThiS sulfur-carrier protein]-C-terminal-Gly-aminoethanethioate + 2-iminoacetate + 1-deoxy-D-xylulose 5-phosphate = [ThiS sulfur-carrier protein]-C-terminal Gly-Gly + 2-[(2R,5Z)-2-carboxy-4-methylthiazol-5(2H)-ylidene]ethyl phosphate + 2 H2O + H(+). It participates in cofactor biosynthesis; thiamine diphosphate biosynthesis. Functionally, catalyzes the rearrangement of 1-deoxy-D-xylulose 5-phosphate (DXP) to produce the thiazole phosphate moiety of thiamine. Sulfur is provided by the thiocarboxylate moiety of the carrier protein ThiS. In vitro, sulfur can be provided by H(2)S. The chain is Thiazole synthase from Shewanella amazonensis (strain ATCC BAA-1098 / SB2B).